A 165-amino-acid chain; its full sequence is Deoxyuridine 5'-triphosphate nucleotidohydrolase (165 aa).

The protein belongs to the dUTPase family. In terms of assembly, homotrimer. Mg(2+) serves as cofactor.

It localises to the host cytoplasm. It is found in the virion. It catalyses the reaction dUTP + H2O = dUMP + diphosphate + H(+). The viral dUTPase may play a role in lowering the dUTP concentration in natural infections to minimize misincorporation of deoxyuridine into the viral DNA and ensure the fidelity of genome replication. In Ornithodoros (relapsing fever ticks), this protein is Deoxyuridine 5'-triphosphate nucleotidohydrolase.